The chain runs to 31 residues: Cytochrome b6-f complex subunit 6 (31 aa).

The helical transmembrane segment at 3–23 (LFIGYIIFLVAFFGLATGLFL) threads the bilayer.

This sequence belongs to the PetL family. As to quaternary structure, the 4 large subunits of the cytochrome b6-f complex are cytochrome b6, subunit IV (17 kDa polypeptide, PetD), cytochrome f and the Rieske protein, while the 4 small subunits are PetG, PetL, PetM and PetN. The complex functions as a dimer.

The protein localises to the plastid. Its subcellular location is the chloroplast thylakoid membrane. Its function is as follows. Component of the cytochrome b6-f complex, which mediates electron transfer between photosystem II (PSII) and photosystem I (PSI), cyclic electron flow around PSI, and state transitions. PetL is important for photoautotrophic growth as well as for electron transfer efficiency and stability of the cytochrome b6-f complex. In Porphyra purpurea (Red seaweed), this protein is Cytochrome b6-f complex subunit 6.